Reading from the N-terminus, the 474-residue chain is Pyruvate kinase (474 aa).

R33 lines the substrate pocket. Positions 35, 37, and 67 each coordinate K(+). An ATP-binding site is contributed by 35–38 (NFSH). ATP is bound by residues R74 and K155. Mg(2+) is bound at residue E220. Positions 243, 244, and 276 each coordinate substrate. D244 is a Mg(2+) binding site.

This sequence belongs to the pyruvate kinase family. In terms of assembly, homotetramer. Mg(2+) serves as cofactor. The cofactor is K(+).

It catalyses the reaction pyruvate + ATP = phosphoenolpyruvate + ADP + H(+). Its pathway is carbohydrate degradation; glycolysis; pyruvate from D-glyceraldehyde 3-phosphate: step 5/5. This is Pyruvate kinase (pyk) from Corynebacterium efficiens (strain DSM 44549 / YS-314 / AJ 12310 / JCM 11189 / NBRC 100395).